Consider the following 344-residue polypeptide: E3 ubiquitin-protein ligase RING2-A (344 aa).

The interaction with HIP2 stretch occupies residues 2–181; it reads ATPVNAQCSS…EDNCDSRSHV (180 aa). The segment at 48–88 adopts an RING-type zinc-finger fold; that stretch reads CPICLDMLKNTMTTKECLHRFCSDCIVTALRSGNKECPTCR. The segment at 90–95 is interaction with nucleosomes via an acidic patch on histone H2A and histone H2B; the sequence is KLVSKR. The tract at residues 148-230 is disordered; the sequence is QAMHRAQRVR…DPPGGGETGS (83 aa). Positions 180–192 are enriched in polar residues; that stretch reads HVSNPSVHSNQEA.

Component of chromatin-associated Polycomb (PcG) complexes. Component of a PRC1-like complex. Component of some MLL1/MLL complex.

Its subcellular location is the nucleus. It is found in the cytoplasm. It localises to the chromosome. The catalysed reaction is S-ubiquitinyl-[E2 ubiquitin-conjugating enzyme]-L-cysteine + [acceptor protein]-L-lysine = [E2 ubiquitin-conjugating enzyme]-L-cysteine + N(6)-ubiquitinyl-[acceptor protein]-L-lysine.. The protein operates within protein modification; protein ubiquitination. In terms of biological role, E3 ubiquitin-protein ligase that mediates monoubiquitination of 'Lys-119' of histone H2A (H2AK119Ub), thereby playing a central role in histone code and gene regulation. H2AK119Ub gives a specific tag for epigenetic transcriptional repression. Essential component of a Polycomb group (PcG) multiprotein PRC1-like complex, a complex class required to maintain the transcriptionally repressive state of many genes, including Hox genes, throughout development. PcG PRC1 complex acts via chromatin remodeling and modification of histones, rendering chromatin heritably changed in its expressibility. This Xenopus laevis (African clawed frog) protein is E3 ubiquitin-protein ligase RING2-A (rnf2-a).